A 136-amino-acid polypeptide reads, in one-letter code: Large ribosomal subunit protein uL16 (136 aa).

It belongs to the universal ribosomal protein uL16 family. As to quaternary structure, part of the 50S ribosomal subunit.

Functionally, binds 23S rRNA and is also seen to make contacts with the A and possibly P site tRNAs. The chain is Large ribosomal subunit protein uL16 from Ruthia magnifica subsp. Calyptogena magnifica.